We begin with the raw amino-acid sequence, 485 residues long: Probable glycine dehydrogenase (decarboxylating) subunit 2 (485 aa).

Lys269 is modified (N6-(pyridoxal phosphate)lysine).

This sequence belongs to the GcvP family. C-terminal subunit subfamily. The glycine cleavage system is composed of four proteins: P, T, L and H. In this organism, the P 'protein' is a heterodimer of two subunits. The cofactor is pyridoxal 5'-phosphate.

The catalysed reaction is N(6)-[(R)-lipoyl]-L-lysyl-[glycine-cleavage complex H protein] + glycine + H(+) = N(6)-[(R)-S(8)-aminomethyldihydrolipoyl]-L-lysyl-[glycine-cleavage complex H protein] + CO2. Functionally, the glycine cleavage system catalyzes the degradation of glycine. The P protein binds the alpha-amino group of glycine through its pyridoxal phosphate cofactor; CO(2) is released and the remaining methylamine moiety is then transferred to the lipoamide cofactor of the H protein. This is Probable glycine dehydrogenase (decarboxylating) subunit 2 from Chlorobium phaeovibrioides (strain DSM 265 / 1930) (Prosthecochloris vibrioformis (strain DSM 265)).